The primary structure comprises 92 residues: Nodulation protein F (92 aa).

The Carrier domain maps to 4–88 (QLTLEIISAI…DVVEAVRGLL (85 aa)). S45 carries the O-(pantetheine 4'-phosphoryl)serine modification.

4'-phosphopantetheine is transferred from CoA to a specific serine of apo-NodF.

In terms of biological role, proposed to synthesize nod factor fatty acyl chain. Involved in trans-2,trans-4,trans-6,cis-11-octadecatetraenoic acid biosynthesis. The sequence is that of Nodulation protein F (nodF) from Rhizobium leguminosarum bv. viciae.